The chain runs to 214 residues: MNVNQTMADNQQRCELKLIASPGSWRLYSARKIDERFKSYEQKIFQRDRYTCQFCGFQARLYQDIVNLDGDYTNNRLSNLVTACCFCAQCFFVESVGVGGYGGGTLIYLPELTQAELNSLCHVLFCAITNDTGYKSSAQNIYRSFKFRSQIVEEKFGEGTSDPAIFGQLMIDSGVNSEEIREKLFKNIRLLPSRAKFRKQIEKWAASALEEIAD.

The Zn(2+) site is built by C52, C55, C84, and C87.

In terms of assembly, the T4BSS is a complex nanomachine composed of several subcomplexes. This subunit is part of the Type IV Coupling Complex (T4CC), a subcomplex composed of the DotLMNYZ core and the IcmSW-LvgA adapter subunits, linked by the C-terminal tail of DotL. Six DotLMNYZ hetero-pentameric units may assemble into a hexameric nanomachine, forming an inner membrane channel for effectors to pass through. Interacts directly with DotL. Interacts with DotZ.

Its subcellular location is the cytoplasm. Functionally, component of the Dot/Icm type IVB secretion system (T4BSS), which is used to inject bacterial effector proteins into eukaryotic host cells. Part of a subcomplex which recruits effector proteins and delivers them to the core transmembrane subcomplex. The protein is Type 4 apparatus protein DotN of Legionella pneumophila subsp. pneumophila (strain Philadelphia 1 / ATCC 33152 / DSM 7513).